The sequence spans 67 residues: DNA-directed RNA polymerase subunit omega (67 aa).

Belongs to the RNA polymerase subunit omega family. As to quaternary structure, the RNAP catalytic core consists of 2 alpha, 1 beta, 1 beta' and 1 omega subunit. When a sigma factor is associated with the core the holoenzyme is formed, which can initiate transcription.

The enzyme catalyses RNA(n) + a ribonucleoside 5'-triphosphate = RNA(n+1) + diphosphate. In terms of biological role, promotes RNA polymerase assembly. Latches the N- and C-terminal regions of the beta' subunit thereby facilitating its interaction with the beta and alpha subunits. This Delftia acidovorans (strain DSM 14801 / SPH-1) protein is DNA-directed RNA polymerase subunit omega.